A 1175-amino-acid chain; its full sequence is Phospholipid-transporting ATPase IF (1175 aa).

The next 4 membrane-spanning stretches (helical) occupy residues 69-89 (FYFL…SPIT), 91-111 (GLPL…EDWL), 287-307 (NTFL…STIL), and 338-358 (FISD…ISLY). The active-site 4-aspartylphosphate intermediate is D407. Residues D407, K408, T409, E530, F571, K594, R625, T705, G706, D707, R793, and K799 each coordinate ATP. D407 provides a ligand contact to Mg(2+). Position 409 (T409) interacts with Mg(2+). D820 provides a ligand contact to Mg(2+). Residues N823 and D824 each coordinate ATP. D824 is a binding site for Mg(2+). 6 consecutive transmembrane segments (helical) span residues 862–882 (LLFV…QYFF), 910–930 (VYLT…YSLV), 963–983 (WTVL…FLVG), 994–1014 (MFGN…TVTV), 1033–1053 (GSII…WPFL), and 1060–1080 (FVFI…LMVV).

Belongs to the cation transport ATPase (P-type) (TC 3.A.3) family. Type IV subfamily. As to quaternary structure, component of a P4-ATPase flippase complex which consists of a catalytic alpha subunit ATP11B and an accessory beta subunit TMEM30A. It depends on Mg(2+) as a cofactor. Expressed in retina, brain, liver, testes and kidney (at protein level).

It is found in the recycling endosome membrane. It localises to the early endosome. Its subcellular location is the endoplasmic reticulum. The protein resides in the golgi apparatus. The protein localises to the trans-Golgi network. It carries out the reaction ATP + H2O + phospholipidSide 1 = ADP + phosphate + phospholipidSide 2.. The enzyme catalyses a 1,2-diacyl-sn-glycero-3-phospho-L-serine(out) + ATP + H2O = a 1,2-diacyl-sn-glycero-3-phospho-L-serine(in) + ADP + phosphate + H(+). It catalyses the reaction a 1,2-diacyl-sn-glycero-3-phosphoethanolamine(out) + ATP + H2O = a 1,2-diacyl-sn-glycero-3-phosphoethanolamine(in) + ADP + phosphate + H(+). Functionally, catalytic component of a P4-ATPase flippase complex which catalyzes the hydrolysis of ATP coupled to the transport of aminophospholipids, phosphatidylserines (PS) and phosphatidylethanolamines (PE), from the outer to the inner leaflet of intracellular membranes. May contribute to the maintenance of membrane lipid asymmetry in endosome compartment. The protein is Phospholipid-transporting ATPase IF of Mus musculus (Mouse).